The following is a 938-amino-acid chain: Isoleucine--tRNA ligase (938 aa).

A 'HIGH' region motif is present at residues 58-68 (PYANGSIHIGH). Lys-183 is modified (N6-acetyllysine). Glu-561 provides a ligand contact to L-isoleucyl-5'-AMP. Residues 602–606 (KMSKS) carry the 'KMSKS' region motif. Lys-605 is a binding site for ATP. Residues Cys-901, Cys-904, Cys-921, and Cys-924 each coordinate Zn(2+).

The protein belongs to the class-I aminoacyl-tRNA synthetase family. IleS type 1 subfamily. Monomer. Zn(2+) serves as cofactor.

It localises to the cytoplasm. The enzyme catalyses tRNA(Ile) + L-isoleucine + ATP = L-isoleucyl-tRNA(Ile) + AMP + diphosphate. Functionally, catalyzes the attachment of isoleucine to tRNA(Ile). As IleRS can inadvertently accommodate and process structurally similar amino acids such as valine, to avoid such errors it has two additional distinct tRNA(Ile)-dependent editing activities. One activity is designated as 'pretransfer' editing and involves the hydrolysis of activated Val-AMP. The other activity is designated 'posttransfer' editing and involves deacylation of mischarged Val-tRNA(Ile). In Shigella flexneri, this protein is Isoleucine--tRNA ligase.